Consider the following 529-residue polypeptide: [Pyruvate dehydrogenase [acetyl-transferring]]-phosphatase 2, mitochondrial (529 aa).

The N-terminal 66 residues, M1–T66, are a transit peptide targeting the mitochondrion. One can recognise a PPM-type phosphatase domain in the interval V106 to F517. Mn(2+)-binding residues include D141, G142, D412, and D508.

This sequence belongs to the PP2C family. Requires Mg(2+) as cofactor.

The protein localises to the mitochondrion. The catalysed reaction is O-phospho-L-seryl-[pyruvate dehydrogenase E1 alpha subunit] + H2O = L-seryl-[pyruvate dehydrogenase E1 alpha subunit] + phosphate. In terms of biological role, mitochondrial enzyme that catalyzes the dephosphorylation and concomitant reactivation of the alpha subunit of the E1 component of the pyruvate dehydrogenase complex (PDC), thereby stimulating the conversion of pyruvate into acetyl-CoA. Acts as a crucial regulator of T cell metabolism and function, with a particular focus on T-helper Th17. This is [Pyruvate dehydrogenase [acetyl-transferring]]-phosphatase 2, mitochondrial from Homo sapiens (Human).